A 336-amino-acid chain; its full sequence is MQTFIITSPVFNPYFNAALEEWLLTEFRKNELVKVIYFWQNANTIVVGRNQNTYAEVNLKELESDKVNLFRRFSGGGAVFHDLGNICFSIILPRTGKVMENAYEQTTRNVVKFLNSLNVPAVFHGRNDLEINNKKFSGLAEYIAKDRLLVHGTLLFDTDFSKLAKYLNVDKTKIASKGVDSVAKRVVNVKEYLPNWTTAKFLEEMINFFTVTEKAETIVLTKDALAKVEKRAKEHFQSWEWNFGKTYEYNFKNKRYFNNAGLFECNVQVEKGTVVDIKFYGDFLSVVDITPVTKKLIGQKYDYKTFEKLFNELDHFSDYFGSLKPEQLLGVIFDNK.

Residues 30-217 enclose the BPL/LPL catalytic domain; that stretch reads NELVKVIYFW…FFTVTEKAET (188 aa). Residues Arg72, 77-80, and Lys135 each bind ATP; that span reads GAVF. Lys135 contributes to the (R)-lipoate binding site.

Belongs to the LplA family.

It is found in the cytoplasm. It carries out the reaction L-lysyl-[lipoyl-carrier protein] + (R)-lipoate + ATP = N(6)-[(R)-lipoyl]-L-lysyl-[lipoyl-carrier protein] + AMP + diphosphate + H(+). The protein operates within protein modification; protein lipoylation via exogenous pathway; protein N(6)-(lipoyl)lysine from lipoate: step 1/2. It participates in protein modification; protein lipoylation via exogenous pathway; protein N(6)-(lipoyl)lysine from lipoate: step 2/2. Catalyzes both the ATP-dependent activation of exogenously supplied lipoate to lipoyl-AMP and the transfer of the activated lipoyl onto the lipoyl domains of lipoate-dependent enzymes. The chain is Probable lipoate-protein ligase A (lplA) from Mycoplasma genitalium (strain ATCC 33530 / DSM 19775 / NCTC 10195 / G37) (Mycoplasmoides genitalium).